The sequence spans 255 residues: Small ribosomal subunit protein uS3c (255 aa).

The 74-residue stretch at 51 to 124 (IRESSNTSYG…NKNQNKNTGQ (74 aa)) folds into the KH type-2 domain. The segment at 96–121 (EKNRDKNKSNKNSALDQSVNKNQNKN) is disordered. A compositionally biased stretch (polar residues) spans 108–121 (SALDQSVNKNQNKN).

Belongs to the universal ribosomal protein uS3 family. In terms of assembly, part of the 30S ribosomal subunit.

It localises to the plastid. The protein localises to the chloroplast. This Chaetosphaeridium globosum (Charophycean green alga) protein is Small ribosomal subunit protein uS3c (rps3).